Here is a 290-residue protein sequence, read N- to C-terminus: Putative beta-lactamase HcpC (290 aa).

A signal peptide spans 1-25; the sequence is MLENVKKSFFRVLCLGALCLGGLMA. TPR repeat units lie at residues 29-62, 64-98, 100-133, 134-170, 172-205, 206-242, and 244-278; these read PKEL…KENS, CFNL…NYSN, CHLL…LKYA, EGCA…NDGD, CTIL…LKDS, PGCF…ENGG, and CFNL…GAKG. Cystine bridges form between cysteine 56–cysteine 64, cysteine 92–cysteine 100, cysteine 128–cysteine 136, cysteine 164–cysteine 172, cysteine 200–cysteine 208, cysteine 236–cysteine 244, and cysteine 272–cysteine 280.

This sequence belongs to the hcp beta-lactamase family.

The protein resides in the secreted. It carries out the reaction a beta-lactam + H2O = a substituted beta-amino acid. May hydrolyze 6-aminopenicillinic acid and 7-aminocephalosporanic acid (ACA) derivatives. The polypeptide is Putative beta-lactamase HcpC (hcpC) (Helicobacter pylori (strain ATCC 700392 / 26695) (Campylobacter pylori)).